The primary structure comprises 443 residues: ATP-dependent protease ATPase subunit HslU (443 aa).

ATP contacts are provided by residues Val18 and 60 to 65 (GVGKTE). Positions 136 to 158 (LPPPRDFNEDSQRTNADSSTRQL) are disordered. Polar residues predominate over residues 148-157 (RTNADSSTRQ). Positions 256, 321, and 393 each coordinate ATP.

It belongs to the ClpX chaperone family. HslU subfamily. In terms of assembly, a double ring-shaped homohexamer of HslV is capped on each side by a ring-shaped HslU homohexamer. The assembly of the HslU/HslV complex is dependent on binding of ATP.

Its subcellular location is the cytoplasm. ATPase subunit of a proteasome-like degradation complex; this subunit has chaperone activity. The binding of ATP and its subsequent hydrolysis by HslU are essential for unfolding of protein substrates subsequently hydrolyzed by HslV. HslU recognizes the N-terminal part of its protein substrates and unfolds these before they are guided to HslV for hydrolysis. The polypeptide is ATP-dependent protease ATPase subunit HslU (Marinobacter nauticus (strain ATCC 700491 / DSM 11845 / VT8) (Marinobacter aquaeolei)).